A 362-amino-acid chain; its full sequence is Protein RecA (362 aa).

65–72 (GPESSGKT) provides a ligand contact to ATP. The disordered stretch occupies residues 323-362 (RVANGMEPLNEKSTKETADDKASGKTGENKQETIEEASKE). Basic and acidic residues predominate over residues 331–362 (LNEKSTKETADDKASGKTGENKQETIEEASKE).

This sequence belongs to the RecA family.

The protein resides in the cytoplasm. Functionally, can catalyze the hydrolysis of ATP in the presence of single-stranded DNA, the ATP-dependent uptake of single-stranded DNA by duplex DNA, and the ATP-dependent hybridization of homologous single-stranded DNAs. It interacts with LexA causing its activation and leading to its autocatalytic cleavage. This is Protein RecA from Limosilactobacillus reuteri (strain DSM 20016) (Lactobacillus reuteri).